Reading from the N-terminus, the 288-residue chain is Hypersensitive-induced response protein-like protein 1 (288 aa).

A lipid anchor (N-myristoyl glycine) is attached at glycine 2.

In terms of biological role, positive regulator of hypersensitive response (HR)-like cell death. May be involved in potassium ion channel regulation. This Oryza sativa subsp. japonica (Rice) protein is Hypersensitive-induced response protein-like protein 1.